The following is a 213-amino-acid chain: Ribonuclease HII (213 aa).

The RNase H type-2 domain occupies 1–213 (MKIIGIDEAG…SWKTAQKFIQ (213 aa)). A divalent metal cation is bound by residues aspartate 7, glutamate 8, and aspartate 105.

Belongs to the RNase HII family. Requires Mn(2+) as cofactor. Mg(2+) serves as cofactor.

Its subcellular location is the cytoplasm. It carries out the reaction Endonucleolytic cleavage to 5'-phosphomonoester.. Its function is as follows. Endonuclease that specifically degrades the RNA of RNA-DNA hybrids. The chain is Ribonuclease HII from Methanococcoides burtonii (strain DSM 6242 / NBRC 107633 / OCM 468 / ACE-M).